The sequence spans 330 residues: Olfactory receptor 1P1 (330 aa).

Over 1-39 (MGLTQDFFPPTSELLEGGNQTSTFEFLLWGLSDQPQQQH) the chain is Extracellular. N-linked (GlcNAc...) asparagine glycosylation is present at asparagine 19. A helical transmembrane segment spans residues 40–60 (IFFLLFLWMYVVTVAGNLLIV). Residues 61–71 (LAIGTDTHLHT) are Cytoplasmic-facing. A helical transmembrane segment spans residues 72 to 92 (PMYFFLASLSCADIFSTSTTV). The Extracellular portion of the chain corresponds to 93 to 111 (PKALVNIQTQSRSISYAGC). Cysteine 111 and cysteine 192 are disulfide-bonded. Residues 112-132 (LAQLYFFLTFGDMDIFLPATM) form a helical membrane-spanning segment. Residues 133 to 137 (AYDRY) lie on the Cytoplasmic side of the membrane. Residues 138–158 (VAICHLLHYMMIMSLHRCAFL) form a helical membrane-spanning segment. The Extracellular segment spans residues 159-209 (VTACWTLTSLLAMTRTFLIFRLSLCSKILPGFFCDLGPLMKVSCSDAQVNE). The helical transmembrane segment at 210–230 (LVLLFLGGAVILIPFMLILVS) threads the bilayer. The Cytoplasmic portion of the chain corresponds to 231–257 (YIRIVSAILRAPSAQGRRKAFSTCDSH). A helical membrane pass occupies residues 258–278 (LVVVALFFGTVIRAYLCPSSS). The Extracellular segment spans residues 279–286 (SSNSVKED). A helical transmembrane segment spans residues 287 to 307 (TAAAVMYTVVTPLLNPFIYSM). The Cytoplasmic segment spans residues 308 to 330 (RNKDMKAAVVRLLKGRVSFSQGQ).

It belongs to the G-protein coupled receptor 1 family.

The protein localises to the cell membrane. In terms of biological role, odorant receptor. The polypeptide is Olfactory receptor 1P1 (OR1P1) (Homo sapiens (Human)).